A 510-amino-acid polypeptide reads, in one-letter code: Chromosomal replication initiator protein DnaA (510 aa).

Positions 1 to 107 are domain I, interacts with DnaA modulators; sequence MTNDPGSGFA…VRIAPPPADD (107 aa). The domain II stretch occupies residues 107 to 169; sequence DDDDSVAAAV…ADTSASAGGT (63 aa). The segment at 119-168 is disordered; sequence PGLEASPETSQEVSDEIDDFGENAPNSRQSWPTHFKKRSTDADTSASAGG. The tract at residues 170–386 is domain III, AAA+ region; that stretch reads SLNRRYTFDT…GALIRVTAFA (217 aa). Positions 214, 216, 217, and 218 each coordinate ATP. The interval 387-510 is domain IV, binds dsDNA; that stretch reads SLNKTPIDKA…TTRIRQRSKR (124 aa).

This sequence belongs to the DnaA family. Oligomerizes as a right-handed, spiral filament on DNA at oriC.

Its subcellular location is the cytoplasm. Its function is as follows. Plays an essential role in the initiation and regulation of chromosomal replication. ATP-DnaA binds to the origin of replication (oriC) to initiate formation of the DNA replication initiation complex once per cell cycle. Binds the DnaA box (a 9 base pair repeat at the origin) and separates the double-stranded (ds)DNA. Forms a right-handed helical filament on oriC DNA; dsDNA binds to the exterior of the filament while single-stranded (ss)DNA is stabiized in the filament's interior. The ATP-DnaA-oriC complex binds and stabilizes one strand of the AT-rich DNA unwinding element (DUE), permitting loading of DNA polymerase. After initiation quickly degrades to an ADP-DnaA complex that is not apt for DNA replication. Binds acidic phospholipids. This is Chromosomal replication initiator protein DnaA from Mycobacterium marinum (strain ATCC BAA-535 / M).